A 407-amino-acid polypeptide reads, in one-letter code: Protein-glutamine gamma-glutamyltransferase (407 aa).

An N-terminal signal peptide occupies residues 1–31 (MRIRRRALVFATMSAVLCTAGFMPSAGEAAA). The propeptide occupies 32 to 76 (DNGAGEETKSYAETYRLTADDVANINALNESAPAASSAGPSFRAP). Low complexity predominate over residues 62–72 (SAPAASSAGPS). Positions 62–98 (SAPAASSAGPSFRAPDSDDRVTPPAEPLDRMPDPYRP) are disordered. Positions 76–94 (PDSDDRVTPPAEPLDRMPD) are enriched in basic and acidic residues. Cys-140 is a catalytic residue. Residues 282–322 (QDRSSSADKRKYGDPDAFRPAPGTGLVDMSRDRNIPRSPTS) are disordered. Positions 286 to 298 (SSADKRKYGDPDA) are enriched in basic and acidic residues. Catalysis depends on residues Asp-331 and His-350.

The protein belongs to the bacterial TGase family.

It catalyses the reaction L-glutaminyl-[protein] + L-lysyl-[protein] = [protein]-L-lysyl-N(6)-5-L-glutamyl-[protein] + NH4(+). In terms of biological role, catalyzes the cross-linking of proteins and the conjugation of polyamines to proteins. The sequence is that of Protein-glutamine gamma-glutamyltransferase from Streptomyces mobaraensis (Streptoverticillium mobaraense).